A 263-amino-acid chain; its full sequence is Fructose-bisphosphate aldolase class 1 (263 aa).

Lysine 177 acts as the Schiff-base intermediate with dihydroxyacetone-P in catalysis.

The protein belongs to the DeoC/FbaB aldolase family.

It carries out the reaction beta-D-fructose 1,6-bisphosphate = D-glyceraldehyde 3-phosphate + dihydroxyacetone phosphate. Has aldolase activity with fructose 1,6-bisphosphate. May play a role in the biosynthesis of aromatic amino acids (AroAA). This Halobacterium salinarum (strain ATCC 29341 / DSM 671 / R1) protein is Fructose-bisphosphate aldolase class 1 (fba1).